The chain runs to 585 residues: Beta-(1--&gt;2)glucan export ATP-binding/permease protein NdvA (585 aa).

Residues 21 to 301 (VGAIVIANIV…MKAFATQIFE (281 aa)) enclose the ABC transmembrane type-1 domain. Transmembrane regions (helical) follow at residues 22–42 (GAIV…PILF), 55–75 (VAPM…AFVL), 136–156 (QHLA…AMDV), 158–178 (LSLI…VVMS), 245–265 (LNRI…TVLV), and 269–289 (ELGV…IGRL). An ABC transporter domain is found at 335-569 (VEFRDISFDF…NGRFAALLRA (235 aa)). 368–375 (GPTGAGKT) provides a ligand contact to ATP.

Belongs to the ABC transporter superfamily. Beta-(1--&gt;2)glucan exporter (TC 3.A.1.108.1) family. Homodimer.

It is found in the cell inner membrane. It catalyses the reaction [(1-&gt;2)-beta-D-glucosyl](n)(in) + ATP + H2O = [(1-&gt;2)-beta-D-glucosyl](n)(out) + ADP + phosphate + H(+). Functionally, involved in beta-(1--&gt;2)glucan export which is required for nodulation of legume roots. May be involved in other classes of oligosaccharides export. Transmembrane domains (TMD) form a pore in the inner membrane and the ATP-binding domain (NBD) is responsible for energy generation. This chain is Beta-(1--&gt;2)glucan export ATP-binding/permease protein NdvA, found in Rhizobium meliloti (strain 1021) (Ensifer meliloti).